Reading from the N-terminus, the 89-residue chain is Small ribosomal subunit protein uS14 (89 aa).

It belongs to the universal ribosomal protein uS14 family. As to quaternary structure, part of the 30S ribosomal subunit. Contacts proteins S3 and S10.

In terms of biological role, binds 16S rRNA, required for the assembly of 30S particles and may also be responsible for determining the conformation of the 16S rRNA at the A site. The chain is Small ribosomal subunit protein uS14 from Chlorobium chlorochromatii (strain CaD3).